We begin with the raw amino-acid sequence, 379 residues long: Chaperone protein DnaJ (379 aa).

Residues 5–70 form the J domain; the sequence is DYYEVLGVEK…QKRAAYDQYG (66 aa). Residues 133–211 form a CR-type zinc finger; the sequence is GKSVEIRVPT…CHGQGRVEKT (79 aa). Zn(2+) is bound by residues C146, C149, C163, C166, C185, C188, C199, and C202. CXXCXGXG motif repeat units follow at residues 146-153, 163-170, 185-192, and 199-206; these read CDTCDGSG, CTTCHGQG, CPTCGGKG, and CDVCHGQG.

It belongs to the DnaJ family. As to quaternary structure, homodimer. Requires Zn(2+) as cofactor.

It is found in the cytoplasm. Functionally, participates actively in the response to hyperosmotic and heat shock by preventing the aggregation of stress-denatured proteins and by disaggregating proteins, also in an autonomous, DnaK-independent fashion. Unfolded proteins bind initially to DnaJ; upon interaction with the DnaJ-bound protein, DnaK hydrolyzes its bound ATP, resulting in the formation of a stable complex. GrpE releases ADP from DnaK; ATP binding to DnaK triggers the release of the substrate protein, thus completing the reaction cycle. Several rounds of ATP-dependent interactions between DnaJ, DnaK and GrpE are required for fully efficient folding. Also involved, together with DnaK and GrpE, in the DNA replication of plasmids through activation of initiation proteins. This Pseudoalteromonas atlantica (strain T6c / ATCC BAA-1087) protein is Chaperone protein DnaJ.